The sequence spans 245 residues: Tetrahydromethanopterin S-methyltransferase subunit A 1 (245 aa).

Residues 1-222 (MADKKPAADN…AGNYSGKVQG (222 aa)) lie on the Cytoplasmic side of the membrane. H84 lines the 5-hydroxybenzimidazolylcob(I)amide pocket. A helical membrane pass occupies residues 223–243 (IMIGLIFTLVIGFLLLMAPLL). Topologically, residues 244 to 245 (GA) are extracellular.

The protein belongs to the MtrA family. As to quaternary structure, the complex is composed of 8 subunits; MtrA, MtrB, MtrC, MtrD, MtrE, MtrF, MtrG and MtrH. It depends on 5-hydroxybenzimidazolylcob(I)amide as a cofactor.

It is found in the cell membrane. The enzyme catalyses 5-methyl-5,6,7,8-tetrahydromethanopterin + coenzyme M + 2 Na(+)(in) = 5,6,7,8-tetrahydromethanopterin + methyl-coenzyme M + 2 Na(+)(out). It participates in one-carbon metabolism; methanogenesis from CO(2); methyl-coenzyme M from 5,10-methylene-5,6,7,8-tetrahydromethanopterin: step 2/2. Its function is as follows. Part of a complex that catalyzes the formation of methyl-coenzyme M and tetrahydromethanopterin from coenzyme M and methyl-tetrahydromethanopterin. This is an energy-conserving, sodium-ion translocating step. This Methanobrevibacter ruminantium (strain ATCC 35063 / DSM 1093 / JCM 13430 / OCM 146 / M1) (Methanobacterium ruminantium) protein is Tetrahydromethanopterin S-methyltransferase subunit A 1.